A 226-amino-acid polypeptide reads, in one-letter code: Deoxyribose-phosphate aldolase (226 aa).

Aspartate 84 functions as the Proton donor/acceptor in the catalytic mechanism. The Schiff-base intermediate with acetaldehyde role is filled by lysine 146. Catalysis depends on lysine 188, which acts as the Proton donor/acceptor.

It belongs to the DeoC/FbaB aldolase family. DeoC type 1 subfamily.

The protein resides in the cytoplasm. The enzyme catalyses 2-deoxy-D-ribose 5-phosphate = D-glyceraldehyde 3-phosphate + acetaldehyde. The protein operates within carbohydrate degradation; 2-deoxy-D-ribose 1-phosphate degradation; D-glyceraldehyde 3-phosphate and acetaldehyde from 2-deoxy-alpha-D-ribose 1-phosphate: step 2/2. Its function is as follows. Catalyzes a reversible aldol reaction between acetaldehyde and D-glyceraldehyde 3-phosphate to generate 2-deoxy-D-ribose 5-phosphate. The protein is Deoxyribose-phosphate aldolase of Pyrobaculum arsenaticum (strain DSM 13514 / JCM 11321 / PZ6).